The following is a 423-amino-acid chain: UDP-N-acetylglucosamine 1-carboxyvinyltransferase 2 (423 aa).

Lys-23 to Asn-24 contributes to the phosphoenolpyruvate binding site. Residue Arg-93 coordinates UDP-N-acetyl-alpha-D-glucosamine. Cys-117 acts as the Proton donor in catalysis. 2-(S-cysteinyl)pyruvic acid O-phosphothioketal is present on Cys-117. Residues Arg-122–Gln-126, Asp-305, and Ile-327 contribute to the UDP-N-acetyl-alpha-D-glucosamine site.

Belongs to the EPSP synthase family. MurA subfamily.

Its subcellular location is the cytoplasm. It carries out the reaction phosphoenolpyruvate + UDP-N-acetyl-alpha-D-glucosamine = UDP-N-acetyl-3-O-(1-carboxyvinyl)-alpha-D-glucosamine + phosphate. It participates in cell wall biogenesis; peptidoglycan biosynthesis. In terms of biological role, cell wall formation. Adds enolpyruvyl to UDP-N-acetylglucosamine. The polypeptide is UDP-N-acetylglucosamine 1-carboxyvinyltransferase 2 (Listeria innocua serovar 6a (strain ATCC BAA-680 / CLIP 11262)).